A 448-amino-acid polypeptide reads, in one-letter code: Bifunctional protein GlmU (448 aa).

The tract at residues 1–232 is pyrophosphorylase; the sequence is MSDRSLLVVV…ADEVAGVNSR (232 aa). UDP-N-acetyl-alpha-D-glucosamine contacts are provided by residues 11–14, K25, Q78, and 83–84; these read LAAG and GT. D108 is a Mg(2+) binding site. Positions 144, 158, 173, and 230 each coordinate UDP-N-acetyl-alpha-D-glucosamine. Residue N230 coordinates Mg(2+). The tract at residues 233 to 253 is linker; the sequence is VQLAEAEAILQRRLRLAAMAG. Residues 254–448 form an N-acetyltransferase region; that stretch reads GATLVAPETV…FRAARSKPKG (195 aa). UDP-N-acetyl-alpha-D-glucosamine-binding residues include R319 and K337. The Proton acceptor role is filled by H349. Residues Y352 and N363 each coordinate UDP-N-acetyl-alpha-D-glucosamine. Acetyl-CoA contacts are provided by residues A366, 372–373, T409, and R426; that span reads NY.

The protein in the N-terminal section; belongs to the N-acetylglucosamine-1-phosphate uridyltransferase family. In the C-terminal section; belongs to the transferase hexapeptide repeat family. In terms of assembly, homotrimer. Requires Mg(2+) as cofactor.

Its subcellular location is the cytoplasm. It catalyses the reaction alpha-D-glucosamine 1-phosphate + acetyl-CoA = N-acetyl-alpha-D-glucosamine 1-phosphate + CoA + H(+). The enzyme catalyses N-acetyl-alpha-D-glucosamine 1-phosphate + UTP + H(+) = UDP-N-acetyl-alpha-D-glucosamine + diphosphate. Its pathway is nucleotide-sugar biosynthesis; UDP-N-acetyl-alpha-D-glucosamine biosynthesis; N-acetyl-alpha-D-glucosamine 1-phosphate from alpha-D-glucosamine 6-phosphate (route II): step 2/2. It participates in nucleotide-sugar biosynthesis; UDP-N-acetyl-alpha-D-glucosamine biosynthesis; UDP-N-acetyl-alpha-D-glucosamine from N-acetyl-alpha-D-glucosamine 1-phosphate: step 1/1. It functions in the pathway bacterial outer membrane biogenesis; LPS lipid A biosynthesis. In terms of biological role, catalyzes the last two sequential reactions in the de novo biosynthetic pathway for UDP-N-acetylglucosamine (UDP-GlcNAc). The C-terminal domain catalyzes the transfer of acetyl group from acetyl coenzyme A to glucosamine-1-phosphate (GlcN-1-P) to produce N-acetylglucosamine-1-phosphate (GlcNAc-1-P), which is converted into UDP-GlcNAc by the transfer of uridine 5-monophosphate (from uridine 5-triphosphate), a reaction catalyzed by the N-terminal domain. In Xanthobacter autotrophicus (strain ATCC BAA-1158 / Py2), this protein is Bifunctional protein GlmU.